The following is a 517-amino-acid chain: DNA relaxase MbeA (517 aa).

Tyr19 functions as the O-(5'-phospho-DNA)-tyrosine intermediate in the catalytic mechanism. His97, Glu104, and Asn106 together coordinate a divalent metal cation. Disordered stretches follow at residues 281-310 (YSPVHSLDRGIAGKTPGRGERGDDAAQEGR), 380-405 (PSVREISGGDSLSGERVGTSEGVTQS), and 496-517 (SLERERQPEIQERTLDGPSLGW). Positions 297 to 310 (GRGERGDDAAQEGR) are enriched in basic and acidic residues. The segment covering 496–510 (SLERERQPEIQERTL) has biased composition (basic and acidic residues).

The protein to E.coli MbaA and MbkA. As to quaternary structure, interacts with MbeB and MbeC to form the relaxosome. Mn(2+) is required as a cofactor. Requires Co(2+) as cofactor. It depends on Ni(2+) as a cofactor.

It catalyses the reaction ATP-independent breakage of single-stranded DNA, followed by passage and rejoining.. Functionally, relaxase involved in plasmid ColE1 conjugative mobilization and is thus essential to promote the specific transfer of the plasmid during conjugation. First catalyzes the specific cleavage of one of the DNA strands at oriT, forming a covalent 5'-phosphotyrosine intermediate. The nic site corresponds to 5'-(1469)CTGG/CTTA(1462)-3' in the cleaved strand. The cleaved strand is then transferred through the dedicated type IV secretion apparatus. MbeA remains covalently linked at the 5' end of the strand, and once in the recipient cell, it probably catalyzes the rejoining of the two ends of the strand, re-forming the circular plasmid DNA. Is functional in vitro without a requirement for the conjugative accessory proteins. In Escherichia coli, this protein is DNA relaxase MbeA (mbeA).